Reading from the N-terminus, the 69-residue chain is Large ribosomal subunit protein bL31 (69 aa).

The protein belongs to the bacterial ribosomal protein bL31 family. Type A subfamily. In terms of assembly, part of the 50S ribosomal subunit.

Binds the 23S rRNA. In Magnetococcus marinus (strain ATCC BAA-1437 / JCM 17883 / MC-1), this protein is Large ribosomal subunit protein bL31.